A 461-amino-acid chain; its full sequence is Transcription factor GTE3, chloroplastic (461 aa).

Residues 1–11 are compositionally biased toward gly residues; sequence MASGPIAGGGV. Residues 1–41 form a disordered region; sequence MASGPIAGGGVSKTKHKWSDSGNKSQKRSKPTVANSNSLGL. A chloroplast-targeting transit peptide spans 1 to 51; it reads MASGPIAGGGVSKTKHKWSDSGNKSQKRSKPTVANSNSLGLEDNHQMMKIS. One can recognise a Bromo domain in the interval 114-220; that stretch reads KGTVQILKSC…NLFEEKWVPL (107 aa). In terms of domain architecture, NET spans 298–379; it reads LVEEASANRD…EYKESLSKKK (82 aa). Positions 376 to 392 are enriched in basic and acidic residues; that stretch reads SKKKEEQGLDSERDAES. Positions 376 to 461 are disordered; that stretch reads SKKKEEQGLD…SSGHESDTGN (86 aa). The segment covering 393-412 has biased composition (polar residues); it reads FHNSVHESNTLVTGLESSKV. The segment covering 429 to 451 has biased composition (low complexity); that stretch reads GGSSSSNSSSSGSGSGSSGSDSD. Over residues 452–461 the composition is skewed to basic and acidic residues; that stretch reads SSGHESDTGN.

In terms of assembly, interacts with SIZ1 (via PHD domain). In terms of processing, sumoylated by SIZ1. Sumoylation reduces capacity to bind to acetylated histone H3.

The protein resides in the plastid. Its subcellular location is the chloroplast. Its function is as follows. Probable transcription factor that binds to acetylated histone H3. This Arabidopsis thaliana (Mouse-ear cress) protein is Transcription factor GTE3, chloroplastic (GTE3).